The chain runs to 132 residues: Small ribosomal subunit protein uS8 (132 aa).

This sequence belongs to the universal ribosomal protein uS8 family. Part of the 30S ribosomal subunit. Contacts proteins S5 and S12.

In terms of biological role, one of the primary rRNA binding proteins, it binds directly to 16S rRNA central domain where it helps coordinate assembly of the platform of the 30S subunit. In Geobacter sulfurreducens (strain ATCC 51573 / DSM 12127 / PCA), this protein is Small ribosomal subunit protein uS8.